Reading from the N-terminus, the 187-residue chain is UPF0301 protein YqgE (187 aa).

This sequence belongs to the UPF0301 (AlgH) family.

This Salmonella paratyphi A (strain ATCC 9150 / SARB42) protein is UPF0301 protein YqgE.